Reading from the N-terminus, the 393-residue chain is Tryptophan synthase beta chain (393 aa).

An N6-(pyridoxal phosphate)lysine modification is found at K85.

Belongs to the TrpB family. Tetramer of two alpha and two beta chains. The cofactor is pyridoxal 5'-phosphate.

It carries out the reaction (1S,2R)-1-C-(indol-3-yl)glycerol 3-phosphate + L-serine = D-glyceraldehyde 3-phosphate + L-tryptophan + H2O. Its pathway is amino-acid biosynthesis; L-tryptophan biosynthesis; L-tryptophan from chorismate: step 5/5. Its function is as follows. The beta subunit is responsible for the synthesis of L-tryptophan from indole and L-serine. The protein is Tryptophan synthase beta chain (trpB) of Helicobacter pylori (strain ATCC 700392 / 26695) (Campylobacter pylori).